Here is a 190-residue protein sequence, read N- to C-terminus: Cytoglobin (190 aa).

The disordered stretch occupies residues 1 to 21 (MEKVPGDMEIERRERNEELSE). A Globin domain is found at 18-167 (ELSEAERKAV…IYSHVTAAYK (150 aa)). An intrachain disulfide couples cysteine 38 to cysteine 83. Heme b is bound by residues histidine 81 and histidine 113.

It belongs to the globin family. As to quaternary structure, monomeric. Homodimer; disulfide-linked in vitro. Also homooligomeric in vitro. Post-translationally, the formation of an intramolecular disulfide bond between cysteines Cys-38 and Cys-83 specifically enhances the nitrite reductase activity. As to expression, widely expressed (at protein level).

It is found in the cytoplasm. The protein localises to the nucleus. The enzyme catalyses Fe(II)-heme b-[protein] + nitric oxide + O2 = Fe(III)-heme b-[protein] + nitrate. It carries out the reaction Fe(III)-heme b-[protein] + nitric oxide + H2O = Fe(II)-heme b-[protein] + nitrite + 2 H(+). It catalyses the reaction 2 superoxide + 2 H(+) = H2O2 + O2. The catalysed reaction is H2O2 + AH2 = A + 2 H2O. With respect to regulation, the nitric oxide dioxygenase activity is activated by a reducing system composed of cytochrome b5, its upstream reductase CYB5R3 and NADH. Probable multifunctional globin with a hexacoordinated heme iron required for the catalysis of various reactions depending on redox condition of the cell as well as oxygen availability. Has a nitric oxide dioxygenase (NOD) activity and is most probably involved in cell-mediated and oxygen-dependent nitric oxide consumption. By scavenging this second messenger may regulate several biological processes including endothelium-mediated vasodilation and vascular tone. Under normoxic conditions functions as a nitric oxide dioxygenase (NOD) but under hypoxic conditions the globin may switch its function to that of a nitrite (NO2) reductase (NiR), generating nitric oxide. Could also have peroxidase and superoxide dismutase activities, detoxifying reactive oxygen species and protecting cells against oxidative stress. Also binds dioxygen with low affinity and could function as an oxygen sensor but has probably no function as a respiratory oxygen carrier. The sequence is that of Cytoglobin from Rattus norvegicus (Rat).